Here is a 329-residue protein sequence, read N- to C-terminus: Cytosolic Fe-S cluster assembly factor NBP35 (329 aa).

Residues 1 to 33 form a disordered region; it reads MAPSQVEDISKTELETPEHCPGPESEQAGKEDA. A compositionally biased stretch (basic and acidic residues) spans 8 to 18; that stretch reads DISKTELETPE. [4Fe-4S] cluster is bound by residues Cys20, Cys34, Cys37, and Cys43. 74 to 81 contributes to the ATP binding site; it reads GKGGVGKS. The [4Fe-4S] cluster site is built by Cys248 and Cys251.

This sequence belongs to the Mrp/NBP35 ATP-binding proteins family. NUBP1/NBP35 subfamily. Heterotetramer of 2 NBP35 and 2 CFD1 chains. [4Fe-4S] cluster serves as cofactor.

The protein localises to the cytoplasm. The protein resides in the nucleus. In terms of biological role, component of the cytosolic iron-sulfur (Fe/S) protein assembly (CIA) machinery. Required for maturation of extramitochondrial Fe-S proteins. The NBP35-CFD1 heterotetramer forms a Fe-S scaffold complex, mediating the de novo assembly of an Fe-S cluster and its transfer to target apoproteins. Required for biogenesis and export of both ribosomal subunits, which may reflect a role in assembly of the Fe/S clusters in RLI1, a protein which performs rRNA processing and ribosome export. The protein is Cytosolic Fe-S cluster assembly factor NBP35 of Debaryomyces hansenii (strain ATCC 36239 / CBS 767 / BCRC 21394 / JCM 1990 / NBRC 0083 / IGC 2968) (Yeast).